The following is a 444-amino-acid chain: Phosphoglucosamine mutase (444 aa).

Ser99 serves as the catalytic Phosphoserine intermediate. Mg(2+)-binding residues include Ser99, Asp242, Asp244, and Asp246. Residue Ser99 is modified to Phosphoserine.

The protein belongs to the phosphohexose mutase family. Requires Mg(2+) as cofactor. Post-translationally, activated by phosphorylation.

The catalysed reaction is alpha-D-glucosamine 1-phosphate = D-glucosamine 6-phosphate. Catalyzes the conversion of glucosamine-6-phosphate to glucosamine-1-phosphate. In Aliarcobacter butzleri (strain RM4018) (Arcobacter butzleri), this protein is Phosphoglucosamine mutase.